Reading from the N-terminus, the 338-residue chain is Ketol-acid reductoisomerase (NADP(+)) (338 aa).

A KARI N-terminal Rossmann domain is found at 2-182; it reads TKMYYEKDTD…GGARAGVLET (181 aa). Residues 25–28, S51, S53, and 83–86 each bind NADP(+); these read YGSQ and DELQ. H108 is an active-site residue. An NADP(+)-binding site is contributed by G134. A KARI C-terminal knotted domain is found at 183 to 330; sequence TFRTETETDL…SEIRKLYCWN (148 aa). Residues D191, E195, E227, and E231 each contribute to the Mg(2+) site. A substrate-binding site is contributed by S252.

Belongs to the ketol-acid reductoisomerase family. It depends on Mg(2+) as a cofactor.

The enzyme catalyses (2R)-2,3-dihydroxy-3-methylbutanoate + NADP(+) = (2S)-2-acetolactate + NADPH + H(+). It catalyses the reaction (2R,3R)-2,3-dihydroxy-3-methylpentanoate + NADP(+) = (S)-2-ethyl-2-hydroxy-3-oxobutanoate + NADPH + H(+). It functions in the pathway amino-acid biosynthesis; L-isoleucine biosynthesis; L-isoleucine from 2-oxobutanoate: step 2/4. Its pathway is amino-acid biosynthesis; L-valine biosynthesis; L-valine from pyruvate: step 2/4. Its function is as follows. Involved in the biosynthesis of branched-chain amino acids (BCAA). Catalyzes an alkyl-migration followed by a ketol-acid reduction of (S)-2-acetolactate (S2AL) to yield (R)-2,3-dihydroxy-isovalerate. In the isomerase reaction, S2AL is rearranged via a Mg-dependent methyl migration to produce 3-hydroxy-3-methyl-2-ketobutyrate (HMKB). In the reductase reaction, this 2-ketoacid undergoes a metal-dependent reduction by NADPH to yield (R)-2,3-dihydroxy-isovalerate. The protein is Ketol-acid reductoisomerase (NADP(+)) of Clostridium botulinum (strain Alaska E43 / Type E3).